The chain runs to 198 residues: MICOS complex subunit MIC26 (198 aa).

The N-terminal stretch at 1 to 25 (MFKVIQRSVGPASLSLLTFKVYAAP) is a signal peptide. Residues 108–128 (PGFFPRLGVIGFAGLIGLLLA) form a helical membrane-spanning segment. O-linked (Xyl...) (chondroitin sulfate) serine glycosylation occurs at serine 162.

It belongs to the apolipoprotein O/MICOS complex subunit Mic27 family. In terms of assembly, component of the mitochondrial contact site and cristae organizing system (MICOS) complex, composed of at least MICOS10/MIC10, CHCHD3/MIC19, CHCHD6/MIC25, APOOL/MIC27, IMMT/MIC60, APOO/MIC23/MIC26 and MICOS13/MIC13. This complex was also known under the names MINOS or MitOS complex. he MICOS complex associates with mitochondrial outer membrane proteins SAMM50, MTX1 and MTX2 (together described as components of the mitochondrial outer membrane sorting assembly machinery (SAM) complex) and DNAJC11, mitochondrial inner membrane protein TMEM11 and with HSPA9. The MICOS and SAM complexes together with DNAJC11 are part of a large protein complex spanning both membranes termed the mitochondrial intermembrane space bridging (MIB) complex. Interacts with IMMT/MIC60. Interacts with MICOS10/MIC10 and APOOL/MIC27. Post-translationally, O-glycosylation; glycosaminoglycan of chondroitin-sulfate type. In terms of tissue distribution, expressed in all tissues examined. Up-regulated in diabetic heart.

The protein localises to the mitochondrion inner membrane. The protein resides in the secreted. It is found in the mitochondrion. Its subcellular location is the golgi apparatus membrane. It localises to the endoplasmic reticulum membrane. Functionally, component of the MICOS complex, a large protein complex of the mitochondrial inner membrane that plays crucial roles in the maintenance of crista junctions, inner membrane architecture, and formation of contact sites to the outer membrane. Plays a crucial role in crista junction formation and mitochondrial function. Can promote cardiac lipotoxicity by enhancing mitochondrial respiration and fatty acid metabolism in cardiac myoblasts. Promotes cholesterol efflux from macrophage cells. Detected in HDL, LDL and VLDL. Secreted by a microsomal triglyceride transfer protein (MTTP)-dependent mechanism, probably as a VLDL-associated protein that is subsequently transferred to HDL. In Homo sapiens (Human), this protein is MICOS complex subunit MIC26 (APOO).